The sequence spans 304 residues: DCN1-like protein 3 (304 aa).

Disordered stretches follow at residues M1 to S86 and E284 to T304. Residue G2 is the site of N-myristoyl glycine attachment. In terms of domain architecture, DCUN1 spans S86–M278.

In terms of assembly, part of a complex containing DCUN1D3, CUL3 and RBX1. Interacts (via the DCUN1 domain) with the unneddylated cullins: interacts with CUL1, CUL2, CUL3, CUL4A, CUL4B and CUL5; these interactions promote the cullin neddylation and the identity of the cullin dictates the affinity of the interaction. Interacts preferentially with CUL3; this interaction triggers the relocalization of CUL3 to the cell membrane where CUL3 is neddylated. Interacts (via DCUN1 domain) with RBX1. May also interact with regulators or subunits of cullin-RING ligases such as RNF7, ELOB and DDB1; these interactions are bridged by cullins. Interacts (via DCUN1 domain) with CAND1; this interaction is bridged by cullins and strongly inhibits cullin neddylation. These CAND-cullin-DCNL complexes can only be neddylated in the presence of a substrate adapter. Interacts (via DCUN1 domain) with the N-terminally acetylated form of UBE2M and UBE2F. Tends to be down-regulated in different type of cancers, including lung neuroendocrine carcinoma, thyroid Huerthle cell carcinoma and lung squamous cell carcinoma. Mostly expressed in testis and brain. Highly expressed in liver, bladder and renal normal tissue than their tumor tissue counterparts. Palmitoylation stabilizes DCUN1D3 at the cell membrane.

It localises to the cell membrane. The protein resides in the cytoplasm. Its subcellular location is the nucleus. The protein localises to the perinuclear region. Contributes to the neddylation of all cullins by transferring NEDD8 from N-terminally acetylated NEDD8-conjugating E2s enzyme to different cullin C-terminal domain-RBX complexes and may play a role in the cell cycle progression by regulating the SCF ubiquitin E3 ligase complex, after UV damage. At the cell membrane, can promote and as well inhibit cullins neddylation. The chain is DCN1-like protein 3 from Homo sapiens (Human).